Consider the following 346-residue polypeptide: Phosphoribosylformylglycinamidine cyclo-ligase (346 aa).

The protein belongs to the AIR synthase family.

The protein resides in the cytoplasm. It catalyses the reaction 2-formamido-N(1)-(5-O-phospho-beta-D-ribosyl)acetamidine + ATP = 5-amino-1-(5-phospho-beta-D-ribosyl)imidazole + ADP + phosphate + H(+). Its pathway is purine metabolism; IMP biosynthesis via de novo pathway; 5-amino-1-(5-phospho-D-ribosyl)imidazole from N(2)-formyl-N(1)-(5-phospho-D-ribosyl)glycinamide: step 2/2. This chain is Phosphoribosylformylglycinamidine cyclo-ligase, found in Synechococcus sp. (strain CC9311).